The primary structure comprises 656 residues: DNA ligase (656 aa).

Residues D32 to D36 and S81 to L82 each bind NAD(+). K112 serves as the catalytic N6-AMP-lysine intermediate. The NAD(+) site is built by R133, E167, and K306. Zn(2+)-binding residues include C400, C403, C416, and C421. Residues K577 to D656 enclose the BRCT domain.

The protein belongs to the NAD-dependent DNA ligase family. LigA subfamily. Mg(2+) serves as cofactor. The cofactor is Mn(2+).

The catalysed reaction is NAD(+) + (deoxyribonucleotide)n-3'-hydroxyl + 5'-phospho-(deoxyribonucleotide)m = (deoxyribonucleotide)n+m + AMP + beta-nicotinamide D-nucleotide.. Functionally, DNA ligase that catalyzes the formation of phosphodiester linkages between 5'-phosphoryl and 3'-hydroxyl groups in double-stranded DNA using NAD as a coenzyme and as the energy source for the reaction. It is essential for DNA replication and repair of damaged DNA. The protein is DNA ligase of Helicobacter pylori (strain HPAG1).